A 266-amino-acid chain; its full sequence is 5'-nucleotidase SurE (266 aa).

The a divalent metal cation site is built by D8, D9, S40, and N98.

This sequence belongs to the SurE nucleotidase family. The cofactor is a divalent metal cation.

The protein localises to the cytoplasm. The enzyme catalyses a ribonucleoside 5'-phosphate + H2O = a ribonucleoside + phosphate. Nucleotidase that shows phosphatase activity on nucleoside 5'-monophosphates. The protein is 5'-nucleotidase SurE of Parasynechococcus marenigrum (strain WH8102).